Consider the following 392-residue polypeptide: Enoyl-[acyl-carrier-protein] reductase [NADH] (392 aa).

Residues 46-51 (GSSSGY), 72-73 (LE), 108-109 (DA), and 136-137 (VA) contribute to the NAD(+) site. Position 225 (Y225) interacts with substrate. Residue Y235 is the Proton donor of the active site. NAD(+) is bound by residues K244 and 273–275 (LVT).

The protein belongs to the TER reductase family. As to quaternary structure, monomer.

The catalysed reaction is a 2,3-saturated acyl-[ACP] + NAD(+) = a (2E)-enoyl-[ACP] + NADH + H(+). It functions in the pathway lipid metabolism; fatty acid biosynthesis. Its function is as follows. Involved in the final reduction of the elongation cycle of fatty acid synthesis (FAS II). Catalyzes the reduction of a carbon-carbon double bond in an enoyl moiety that is covalently linked to an acyl carrier protein (ACP). This Streptomyces avermitilis (strain ATCC 31267 / DSM 46492 / JCM 5070 / NBRC 14893 / NCIMB 12804 / NRRL 8165 / MA-4680) protein is Enoyl-[acyl-carrier-protein] reductase [NADH].